Consider the following 453-residue polypeptide: Na(+)/H(+) antiporter NhaA (453 aa).

The next 12 helical transmembrane spans lie at 27–47 (FLHI…AALM), 78–98 (LHFW…GMEI), 114–134 (ILPI…YFSF), 143–163 (GWAV…ALLG), 172–192 (IILL…IAFF), 201–221 (GLVI…IGFA), 222–242 (SAWL…VTGI), 249–269 (VILG…PLTI), 316–336 (PWVA…VSFA), 346–366 (FLIV…GIIT), 385–405 (WAGI…SIFV), and 421–441 (IGVL…GLIY).

This sequence belongs to the NhaA Na(+)/H(+) (TC 2.A.33) antiporter family.

It is found in the cell inner membrane. It carries out the reaction Na(+)(in) + 2 H(+)(out) = Na(+)(out) + 2 H(+)(in). In terms of biological role, na(+)/H(+) antiporter that extrudes sodium in exchange for external protons. This is Na(+)/H(+) antiporter NhaA from Bartonella henselae (strain ATCC 49882 / DSM 28221 / CCUG 30454 / Houston 1) (Rochalimaea henselae).